Here is a 399-residue protein sequence, read N- to C-terminus: Phosphoglycerate kinase (399 aa).

Residues 22-24 (DFN), Arg-38, 61-64 (HLGR), Arg-120, and Arg-153 each bind substrate. ATP is bound by residues Lys-204, Glu-326, and 352–355 (GGDT).

The protein belongs to the phosphoglycerate kinase family. As to quaternary structure, monomer.

The protein resides in the cytoplasm. It carries out the reaction (2R)-3-phosphoglycerate + ATP = (2R)-3-phospho-glyceroyl phosphate + ADP. Its pathway is carbohydrate degradation; glycolysis; pyruvate from D-glyceraldehyde 3-phosphate: step 2/5. In Geobacter sp. (strain M21), this protein is Phosphoglycerate kinase.